A 498-amino-acid polypeptide reads, in one-letter code: Cytochrome P450 6B1 (498 aa).

Cys-443 is a heme binding site.

This sequence belongs to the cytochrome P450 family. Requires heme as cofactor. In terms of tissue distribution, midgut microsome.

The protein resides in the endoplasmic reticulum membrane. The protein localises to the microsome membrane. The catalysed reaction is an organic molecule + reduced [NADPH--hemoprotein reductase] + O2 = an alcohol + oxidized [NADPH--hemoprotein reductase] + H2O + H(+). Its function is as follows. Enables the insect to feed on furanocoumarin-producing plants and evolved as an adaptation for detoxification of xanthotoxin and other furanocoumarins. This is Cytochrome P450 6B1 (CYP6B1) from Papilio polyxenes (Black swallowtail butterfly).